The sequence spans 369 residues: DNA polymerase processivity factor (369 aa).

A disordered region spans residues Ile-345–Gln-369.

This sequence belongs to the herpesviridae DNA polymerase processivity factor family. Interacts with the DNA polymerase catalytic subunit. Interacts with the origin-binding protein.

The protein localises to the host nucleus. In terms of biological role, plays an essential role in viral DNA replication by acting as the polymerase accessory subunit. Associates with the viral polymerase to increase its processivity and forms high-affinity direct interactions with DNA. Facilitates the origin-binding protein UL9 loading onto DNA thus increasing its ability to assemble into a functional complex capable of unwinding duplex DNA. This Gallus gallus (Chicken) protein is DNA polymerase processivity factor (MDV055).